The sequence spans 504 residues: Maturase K (504 aa).

It belongs to the intron maturase 2 family. MatK subfamily.

The protein localises to the plastid. It is found in the chloroplast. Functionally, usually encoded in the trnK tRNA gene intron. Probably assists in splicing its own and other chloroplast group II introns. The polypeptide is Maturase K (Erythrina crista-galli (Cockspur coral tree)).